A 209-amino-acid polypeptide reads, in one-letter code: Chromophore lyase CpcT/CpeT 1 (209 aa).

The protein belongs to the CpcT/CpeT biliprotein lyase family.

In terms of biological role, covalently attaches a chromophore to Cys residue(s) of phycobiliproteins. This Trichodesmium erythraeum (strain IMS101) protein is Chromophore lyase CpcT/CpeT 1.